We begin with the raw amino-acid sequence, 229 residues long: tRNA (guanosine(18)-2'-O)-methyltransferase (229 aa).

Residues threonine 96, isoleucine 139, and leucine 148 each coordinate S-adenosyl-L-methionine.

The protein belongs to the class IV-like SAM-binding methyltransferase superfamily. RNA methyltransferase TrmH family.

It carries out the reaction guanosine(18) in tRNA + S-adenosyl-L-methionine = 2'-O-methylguanosine(18) in tRNA + S-adenosyl-L-homocysteine + H(+). Catalyzes the 2'-O methylation of guanosine at position 18 in tRNA. This is tRNA (guanosine(18)-2'-O)-methyltransferase from Escherichia coli O157:H7.